Here is a 135-residue protein sequence, read N- to C-terminus: Small ribosomal subunit protein eS6 (135 aa).

It belongs to the eukaryotic ribosomal protein eS6 family.

The polypeptide is Small ribosomal subunit protein eS6 (Methanospirillum hungatei JF-1 (strain ATCC 27890 / DSM 864 / NBRC 100397 / JF-1)).